The primary structure comprises 415 residues: ATP-dependent RNA helicase RhlB (415 aa).

A Q motif motif is present at residues 9–37; it reads QRFSDLSLHPIVRDTLAKKGFDFCTPIQA. One can recognise a Helicase ATP-binding domain in the interval 40 to 218; the sequence is LPISLNGRDV…FEDMNDPEYI (179 aa). Position 53-60 (53-60) interacts with ATP; it reads AQTGTGKT. The DEAD box motif lies at 164–167; it reads DEAD. The Helicase C-terminal domain occupies 241–389; that stretch reads DKMALLLTLM…VSQYETEALL (149 aa).

The protein belongs to the DEAD box helicase family. RhlB subfamily. In terms of assembly, component of the RNA degradosome, which is a multiprotein complex involved in RNA processing and mRNA degradation.

The protein localises to the cytoplasm. It catalyses the reaction ATP + H2O = ADP + phosphate + H(+). In terms of biological role, DEAD-box RNA helicase involved in RNA degradation. Has RNA-dependent ATPase activity and unwinds double-stranded RNA. The chain is ATP-dependent RNA helicase RhlB from Haemophilus influenzae (strain PittEE).